Consider the following 422-residue polypeptide: MAMVVSSWRDPQDDVAGGNPGGPNPAAQAARGGGGGAGEQQQAGSGAPHTPQTPGQPGAPATPGTQGDKGQGPPGSGQSQQHIECVVCGDKSSGKHYGQFTCEGCKSFFKRSVRRNLTYTCRANRNCPIDQHHRNQCQYCRLKKCLKVGMRREAVQRGRMPPTQPNPGQYALTNGDPLNGHCYLSGYISLLLRAEPYPTSRYGSQCMQPNNIMGIENICELAARLLFSAVEWARNIPFFPDLQITDQVSLLRLTWSELFVLNAAQCSMPLHVAPLLAAAGLHASPMSADRVVAFMDHIRIFQEQVEKLKALHVDSAEYSCLKAIVLFTSDACGLSDAAHIESLQEKSQCALEEYVRSQYPNQPSRFGKLLLRLPSLRTVSSSVIEQLFFVRLVGKTPIETLIRDMLLSGSSFNWPYMSIQCS.

The segment at 1–80 (MAMVVSSWRD…QGPPGSGQSQ (80 aa)) is disordered. The span at 39-66 (EQQQAGSGAPHTPQTPGQPGAPATPGTQ) shows a compositional bias: low complexity. A DNA-binding region (nuclear receptor) is located at residues 82 to 157 (HIECVVCGDK…VGMRREAVQR (76 aa)). 2 NR C4-type zinc fingers span residues 85-105 (CVVC…CEGC) and 121-145 (CRAN…LKKC). The NR LBD domain occupies 183–409 (YLSGYISLLL…TLIRDMLLSG (227 aa)). An important for dimerization region spans residues 343-422 (LQEKSQCALE…NWPYMSIQCS (80 aa)).

It belongs to the nuclear hormone receptor family. NR2 subfamily. In terms of assembly, binds DNA as dimer; homodimer and probable heterodimer with NR2F6. Interacts with GTF2B; this interaction is direct. Interacts with COPS2.

It is found in the nucleus. In terms of biological role, coup (chicken ovalbumin upstream promoter) transcription factor binds to the ovalbumin promoter and, in conjunction with another protein (S300-II) stimulates initiation of transcription. Binds to both direct repeats and palindromes of the 5'-AGGTCA-3' motif. Represses transcriptional activity of LHCG. The protein is COUP transcription factor 1 (Nr2f1) of Mus musculus (Mouse).